The following is a 361-amino-acid chain: Putative agmatine deiminase (361 aa).

Catalysis depends on cysteine 354, which acts as the Amidino-cysteine intermediate.

Belongs to the agmatine deiminase family.

The enzyme catalyses agmatine + H2O = N-carbamoylputrescine + NH4(+). The protein is Putative agmatine deiminase of Streptococcus pneumoniae (strain Taiwan19F-14).